Here is a 97-residue protein sequence, read N- to C-terminus: MICOS complex subunit MIC12 (97 aa).

Residues 7-24 traverse the membrane as a helical segment; sequence LTSITAVSSTLAASYYFY.

The protein belongs to the MICOS complex subunit Mic12 family. In terms of assembly, component of the mitochondrial contact site and cristae organizing system (MICOS) complex.

It localises to the mitochondrion inner membrane. Component of the MICOS complex, a large protein complex of the mitochondrial inner membrane that plays crucial roles in the maintenance of crista junctions, inner membrane architecture, and formation of contact sites to the outer membrane. The sequence is that of MICOS complex subunit MIC12 (AIM5) from Zygosaccharomyces rouxii (strain ATCC 2623 / CBS 732 / NBRC 1130 / NCYC 568 / NRRL Y-229).